A 225-amino-acid chain; its full sequence is DNA-binding response regulator MtrA (225 aa).

The region spanning 4-117 (RILVVDDDAS…ELVARVRARL (114 aa)) is the Response regulatory domain. The residue at position 53 (D53) is a 4-aspartylphosphate. Residues 125-224 (AEMLSIADVE…VRGVGYKAGP (100 aa)) constitute a DNA-binding region (ompR/PhoB-type).

Phosphorylated by MtrB.

Member of the two-component regulatory system MtrA/MtrB. This Mycolicibacterium paratuberculosis (strain ATCC BAA-968 / K-10) (Mycobacterium paratuberculosis) protein is DNA-binding response regulator MtrA (mtrA).